The following is a 279-amino-acid chain: Troponin T, fast skeletal muscle (279 aa).

Residues 1 to 21 (MSDEEVEHVEEQYEEEEEAQE) are compositionally biased toward acidic residues. The segment at 1-82 (MSDEEVEHVE…EKVDFDDIQK (82 aa)) is disordered. An N-acetylserine modification is found at Ser-2. Residue Ser-2 is modified to Phosphoserine. Basic and acidic residues-rich tracts occupy residues 28 to 49 (EVHEPAPEVHVPEEVHEDALED) and 70 to 82 (PEGEKVDFDDIQK). Phosphoserine is present on Ser-98. Residues 121–163 (RAERAEQQRIRAEKERERQNRLAEEKARREEEDAKRRAEEDLK) show a composition bias toward basic and acidic residues. Positions 121–200 (RAERAEQQRI…TAREMKKKIL (80 aa)) are disordered. Phosphoserine occurs at positions 169, 176, and 177. Residues 191-200 (TAREMKKKIL) are compositionally biased toward basic and acidic residues. Ser-213 is subject to Phosphoserine. Phosphotyrosine is present on Tyr-229.

Belongs to the troponin T family.

In terms of biological role, troponin T is the tropomyosin-binding subunit of troponin, the thin filament regulatory complex which confers calcium-sensitivity to striated muscle actomyosin ATPase activity. In Oryctolagus cuniculus (Rabbit), this protein is Troponin T, fast skeletal muscle (TNNT3).